The following is a 423-amino-acid chain: TNF receptor-associated factor family protein DDB_G0277243 (423 aa).

The RING-type; degenerate zinc finger occupies 20 to 66; that stretch reads CSICVDPVLNSLPLEQHQALSCKNGHLLCQACWGKQLALRKECCICK. 2 TRAF-type zinc fingers span residues 124–179 and 180–237; these read SHLR…NDMP and THIE…CYLS. Residues 287–411 form the MATH domain; the sequence is RYKGNWTIEN…DGKLTINIDV (125 aa).

Belongs to the TNF receptor-associated factor family. A subfamily.

It is found in the cytoplasm. Functionally, probable adapter protein and signal transducer that links members of the tumor necrosis factor receptor family to different signaling pathways by association with the receptor cytoplasmic domain and kinases. The chain is TNF receptor-associated factor family protein DDB_G0277243 from Dictyostelium discoideum (Social amoeba).